The chain runs to 281 residues: 2,3,4,5-tetrahydropyridine-2,6-dicarboxylate N-succinyltransferase (281 aa).

Substrate is bound by residues R108 and D145.

It belongs to the transferase hexapeptide repeat family. In terms of assembly, homotrimer.

Its subcellular location is the cytoplasm. It catalyses the reaction (S)-2,3,4,5-tetrahydrodipicolinate + succinyl-CoA + H2O = (S)-2-succinylamino-6-oxoheptanedioate + CoA. It functions in the pathway amino-acid biosynthesis; L-lysine biosynthesis via DAP pathway; LL-2,6-diaminopimelate from (S)-tetrahydrodipicolinate (succinylase route): step 1/3. This chain is 2,3,4,5-tetrahydropyridine-2,6-dicarboxylate N-succinyltransferase, found in Bradyrhizobium diazoefficiens (strain JCM 10833 / BCRC 13528 / IAM 13628 / NBRC 14792 / USDA 110).